A 372-amino-acid polypeptide reads, in one-letter code: MTSIEPTHTGKKVIVGMSGGVDSSVSAYLLMQQGYQVEGLFMKNWEEDDNDEYCAAAEDLKDAQAVCDKLGIKLHTVNFAAEYWDNVFEYFLAEYKAGRTPNPDIMCNKEIKFKAFLDFADDILDADYIAMGHYVRRRDNADGTTQMLRGVDNNKDQSYFLYTLSHEQVARSLFPVGELEKHEVREIAKKMGLITHDKKDSTGICFIGERKFTEFLGNYLPAQPGNIETAEGEVIGKHQGLMYHTLGQRKGLGIGGMKNSNDDPWYVVDKDLKRNVLVVGQGGHHPRLMSNGMFVNQLHWVDRKGPVEGSQIVVKTRYRQQDIPCTLTYLDDNTLKVVFDEPVAAVTPGQSAVFYDGDVCLGGGIIDQLIRG.

ATP contacts are provided by residues 16-23 (GMSGGVDS) and Met-42. The tract at residues 102–104 (NPD) is interaction with target base in tRNA. The active-site Nucleophile is the Cys-107. Cys-107 and Cys-205 are disulfide-bonded. Residue Gly-132 participates in ATP binding. The tract at residues 155–157 (KDQ) is interaction with tRNA. Catalysis depends on Cys-205, which acts as the Cysteine persulfide intermediate. The interval 317-318 (RY) is interaction with tRNA.

It belongs to the MnmA/TRMU family.

It localises to the cytoplasm. The enzyme catalyses S-sulfanyl-L-cysteinyl-[protein] + uridine(34) in tRNA + AH2 + ATP = 2-thiouridine(34) in tRNA + L-cysteinyl-[protein] + A + AMP + diphosphate + H(+). Its function is as follows. Catalyzes the 2-thiolation of uridine at the wobble position (U34) of tRNA, leading to the formation of s(2)U34. In Shewanella sp. (strain MR-7), this protein is tRNA-specific 2-thiouridylase MnmA.